The sequence spans 583 residues: MNAENLDPATQAQTIWSDTLALIKQNSRLTAREQGWLAGVTAEAVVGTTIILDVENAQTLQVLQTELNEPIIGALEIANGGSPMFPAFKVMPPAQPEPQTTASPEDSGSRAADAQGAAKESVQPDEDSRTPRHSAEQTGDSRPAAAQEREDSAVHMARPDEQTAESHREPEHEPAQQPVTSHYDEAIVQTFEDIDPVAGFGPSVAGTTAPQYPPQSEMQGSFTPGVTGNYRDPVTHLNSNDTFDTFIQGDSNRFARTVALAVAEGSGRDYNPLCIYGGSGLGKTHLLHAIGNYAVQNQKPRPRVLYVTSEEFTNDFIESIRTSGQDNEDPAMEKFYRKYREVDVLLIDDIQFLGGKRGILEQFFHTFNSLYQANKRIVIASDVPPHNLEDFEDRLISRFEQGITVDVKPPNLETRIAILRMLAEQNHIRVPNDVLNLIAERFANNVRELEGALKRVIAMASLNHQPVTRALTERTLQDFFTTDVEVKPTDIIARVAKYFHLTFDDIVGPGRPRSVTLARQIAMYLTRDMTSMSLMNIGQIFGGRDHTTVMHACKHIADKMQEKQEIYNYVNELTVELKQHLND.

The tract at residues 1–91 is domain I, interacts with DnaA modulators; it reads MNAENLDPAT…SPMFPAFKVM (91 aa). Disordered regions lie at residues 86-179 and 197-232; these read PAFK…QQPV and VAGFGPSVAGTTAPQYPPQSEMQGSFTPGVTGNYRD. A domain II region spans residues 91–235; the sequence is MPPAQPEPQT…VTGNYRDPVT (145 aa). Polar residues predominate over residues 97–106; the sequence is EPQTTASPED. Composition is skewed to basic and acidic residues over residues 126–135 and 147–174; these read EDSRTPRHSA and QEREDSAVHMARPDEQTAESHREPEHEP. The segment covering 205–226 has biased composition (polar residues); the sequence is AGTTAPQYPPQSEMQGSFTPGV. Residues 236–460 form a domain III, AAA+ region region; that stretch reads HLNSNDTFDT…GALKRVIAMA (225 aa). ATP-binding residues include Gly280, Gly282, Lys283, and Thr284. The domain IV, binds dsDNA stretch occupies residues 461–583; the sequence is SLNHQPVTRA…TVELKQHLND (123 aa).

Belongs to the DnaA family. As to quaternary structure, oligomerizes as a right-handed, spiral filament on DNA at oriC.

It is found in the cytoplasm. Functionally, plays an essential role in the initiation and regulation of chromosomal replication. ATP-DnaA binds to the origin of replication (oriC) to initiate formation of the DNA replication initiation complex once per cell cycle. Binds the DnaA box (a 9 base pair repeat at the origin) and separates the double-stranded (ds)DNA. Forms a right-handed helical filament on oriC DNA; dsDNA binds to the exterior of the filament while single-stranded (ss)DNA is stabiized in the filament's interior. The ATP-DnaA-oriC complex binds and stabilizes one strand of the AT-rich DNA unwinding element (DUE), permitting loading of DNA polymerase. After initiation quickly degrades to an ADP-DnaA complex that is not apt for DNA replication. Binds acidic phospholipids. In Bifidobacterium animalis subsp. lactis (strain AD011), this protein is Chromosomal replication initiator protein DnaA.